Here is a 489-residue protein sequence, read N- to C-terminus: IPT/TIG domain-containing protein BACOVA_02650 (489 aa).

Residues 1-27 (MKSIYKYLDTRLFLIGLLVLPFLAVVS) form the signal peptide. Residue Cys-28 is the site of N-palmitoyl cysteine attachment. Cys-28 carries the S-diacylglycerol cysteine lipid modification. IPT/TIG domains are found at residues 57-103 (VNPG…PNEL), 136-204 (PYIT…TAPA), and 232-304 (PVVT…AIGG).

It is found in the cell outer membrane. Its pathway is glucan metabolism; xyloglucan degradation. In terms of biological role, polysaccharide-binding protein present at the surface of the cell. Probably mediates xyloglucan-binding before xyloglucan transport in the periplasm for degradation. In Bacteroides ovatus (strain ATCC 8483 / DSM 1896 / JCM 5824 / BCRC 10623 / CCUG 4943 / NCTC 11153), this protein is IPT/TIG domain-containing protein BACOVA_02650.